The chain runs to 621 residues: Protein Rep78 (621 aa).

In terms of domain architecture, PV NS1-Nuc spans 1–199 (MPGFYEIVIK…AQHLTHVSQT (199 aa)). Residues Glu83, His90, and His92 each coordinate a divalent metal cation. An RCR-2 motif is present at residues 90–92 (HMH). Tyr156 serves as the catalytic For nuclease activity. Residues 156–160 (YLLPK) carry the RCR-3 motif. Polar residues predominate over residues 196 to 211 (VSQTQEQNKENQNPNS). The disordered stretch occupies residues 196–216 (VSQTQEQNKENQNPNSDAPVI). Positions 308-463 (DPQYAASVFL…LDHDFGKVTK (156 aa)) constitute an SF3 helicase domain. An ATP-binding site is contributed by 334 to 341 (GPATTGKT). The tract at residues 489-520 (GGAKKRPAPSDADISEPKRVRESVAQPSTSDA) is disordered.

In terms of assembly, hexamer when associated with the viral DNA ori sequence. Interacts with host PRKX. Interacts with host TOPORS. Interacts with host TBP and SUB1/PC4; these interactions play important roles in transcriptional regulation. A divalent metal cation serves as cofactor.

It localises to the host nucleus. Functionally, plays an essential role in the initiation of viral DNA synthesis. Binds specifically to an inverted terminal repeat element (ITR) on the 3' and 5' ends of the viral DNA, where it cleaves a site specifically to generate a priming site for initiation of the synthesis of a complementary strand. Also plays a role as transcriptional regulator, DNA helicase and as key factors in site-specific integration of the viral genome. Regulates host PKA activity by interacting with host PRKX as a mechanism of interfering with helper virus propagation and promoting its own replication. Inhibits the host cell cycle G1/S, S and G2/M transitions. These arrests may provide essential cellular factors for viral DNA replication. The protein is Protein Rep78 (Rep78) of Adeno-associated virus 2 (isolate Srivastava/1982) (AAV-2).